Consider the following 552-residue polypeptide: Asparagine--tRNA ligase, cytoplasmic (552 aa).

The tract at residues 1 to 23 is disordered; that stretch reads MSQVYVNEKTGADSTDVSGSEQQ. Polar residues predominate over residues 12 to 23; that stretch reads ADSTDVSGSEQQ.

It belongs to the class-II aminoacyl-tRNA synthetase family.

It localises to the cytoplasm. It catalyses the reaction tRNA(Asn) + L-asparagine + ATP = L-asparaginyl-tRNA(Asn) + AMP + diphosphate + H(+). This chain is Asparagine--tRNA ligase, cytoplasmic (DED81), found in Debaryomyces hansenii (strain ATCC 36239 / CBS 767 / BCRC 21394 / JCM 1990 / NBRC 0083 / IGC 2968) (Yeast).